The chain runs to 415 residues: Amylovoran biosynthesis protein AmsJ (415 aa).

The protein belongs to the polysaccharide pyruvyl transferase family.

Its pathway is glycan metabolism; exopolysaccharide biosynthesis. Involved in the biosynthesis of amylovoran which functions as a virulence factor. The protein is Amylovoran biosynthesis protein AmsJ (amsJ) of Erwinia amylovora (Fire blight bacteria).